The sequence spans 241 residues: Acetoacetyl-CoA reductase (241 aa).

NADP(+) is bound by residues 12-14 (RGI) and 82-86 (NAGIT). Substrate-binding positions include D88 and 141–144 (QMGQ). The active-site Proton acceptor is Y147. 177-180 (PGYI) lines the NADP(+) pocket. Substrate is bound at residue 178–179 (GY).

The protein belongs to the short-chain dehydrogenases/reductases (SDR) family.

It localises to the cytoplasm. The catalysed reaction is a (3R)-3-hydroxyacyl-CoA + NADP(+) = a 3-oxoacyl-CoA + NADPH + H(+). The protein operates within biopolymer metabolism; poly-(R)-3-hydroxybutanoate biosynthesis. This is Acetoacetyl-CoA reductase from Shinella zoogloeoides (Crabtreella saccharophila).